We begin with the raw amino-acid sequence, 366 residues long: Ribosomal RNA large subunit methyltransferase M (366 aa).

Residues Ser-188, 221 to 224, Asp-240, Asp-260, and Asp-277 contribute to the S-adenosyl-L-methionine site; that span reads CPGG. Catalysis depends on Lys-306, which acts as the Proton acceptor.

Belongs to the class I-like SAM-binding methyltransferase superfamily. RNA methyltransferase RlmE family. RlmM subfamily. As to quaternary structure, monomer.

Its subcellular location is the cytoplasm. The enzyme catalyses cytidine(2498) in 23S rRNA + S-adenosyl-L-methionine = 2'-O-methylcytidine(2498) in 23S rRNA + S-adenosyl-L-homocysteine + H(+). Functionally, catalyzes the 2'-O-methylation at nucleotide C2498 in 23S rRNA. The polypeptide is Ribosomal RNA large subunit methyltransferase M (Escherichia coli O139:H28 (strain E24377A / ETEC)).